Here is a 318-residue protein sequence, read N- to C-terminus: NAC domain-containing protein 59 (318 aa).

Residues 24–174 (LPPGFRFHPT…ECVISRVFHT (151 aa)) enclose the NAC domain. The DNA-binding element occupies 121–180 (VGMKKTLVFYKGRAPKGVKTNWVMHEYRLEGKFAIDNLSKTAKNECVISRVFHTRTDGTK).

As to expression, mostly expressed in root cortex, phloem, atrichoblast and quiescent center (QC), and, to a lower extent, in root endodermis, xylem, pericycle, columella and lateral root cap (LRC). Expressed in roots, cotyledons, very young leaves, senescing leaves, mature flowers and pollen.

It localises to the nucleus. Transcription activator that binds to DNA in promoters of target genes on a specific bipartite motif 5'-[AG]CGT[AG](4-5n)[AG][CT]ACGCAA-3'. Triggers the expression of senescence-associated genes during age-, salt- and dark-induced senescence through a regulatory network that may involve cross-talk with salt- and H(2)O(2)-dependent signaling pathways. This Arabidopsis thaliana (Mouse-ear cress) protein is NAC domain-containing protein 59.